A 642-amino-acid polypeptide reads, in one-letter code: Threonine--tRNA ligase (642 aa).

The region spanning 1 to 61 (MPVITLPDGS…ENDATLSIIT (61 aa)) is the TGS domain. Positions 243–534 (DHRKIGKQLD…LTEEFAGFFP (292 aa)) are catalytic. 3 residues coordinate Zn(2+): C334, H385, and H511.

This sequence belongs to the class-II aminoacyl-tRNA synthetase family. As to quaternary structure, homodimer. Requires Zn(2+) as cofactor.

The protein localises to the cytoplasm. It carries out the reaction tRNA(Thr) + L-threonine + ATP = L-threonyl-tRNA(Thr) + AMP + diphosphate + H(+). In terms of biological role, catalyzes the attachment of threonine to tRNA(Thr) in a two-step reaction: L-threonine is first activated by ATP to form Thr-AMP and then transferred to the acceptor end of tRNA(Thr). Also edits incorrectly charged L-seryl-tRNA(Thr). The polypeptide is Threonine--tRNA ligase (Salmonella agona (strain SL483)).